Consider the following 77-residue polypeptide: UPF0291 protein Bsph_1689 (77 aa).

Belongs to the UPF0291 family.

It is found in the cytoplasm. The sequence is that of UPF0291 protein Bsph_1689 from Lysinibacillus sphaericus (strain C3-41).